A 126-amino-acid chain; its full sequence is Large ribosomal subunit protein bL17 (126 aa).

Belongs to the bacterial ribosomal protein bL17 family. As to quaternary structure, part of the 50S ribosomal subunit. Contacts protein L32.

This Nitrosococcus oceani (strain ATCC 19707 / BCRC 17464 / JCM 30415 / NCIMB 11848 / C-107) protein is Large ribosomal subunit protein bL17.